Here is a 277-residue protein sequence, read N- to C-terminus: 4-hydroxy-tetrahydrodipicolinate reductase (277 aa).

Residues 11–16 (GALGRM) and 110–112 (GTT) contribute to the NAD(+) site. Catalysis depends on H166, which acts as the Proton donor/acceptor. A (S)-2,3,4,5-tetrahydrodipicolinate-binding site is contributed by H167. The active-site Proton donor is K170. Residue 176–177 (GT) coordinates (S)-2,3,4,5-tetrahydrodipicolinate.

This sequence belongs to the DapB family.

It is found in the cytoplasm. It carries out the reaction (S)-2,3,4,5-tetrahydrodipicolinate + NAD(+) + H2O = (2S,4S)-4-hydroxy-2,3,4,5-tetrahydrodipicolinate + NADH + H(+). The enzyme catalyses (S)-2,3,4,5-tetrahydrodipicolinate + NADP(+) + H2O = (2S,4S)-4-hydroxy-2,3,4,5-tetrahydrodipicolinate + NADPH + H(+). Its pathway is amino-acid biosynthesis; L-lysine biosynthesis via DAP pathway; (S)-tetrahydrodipicolinate from L-aspartate: step 4/4. Functionally, catalyzes the conversion of 4-hydroxy-tetrahydrodipicolinate (HTPA) to tetrahydrodipicolinate. This Synechococcus sp. (strain CC9902) protein is 4-hydroxy-tetrahydrodipicolinate reductase.